Consider the following 173-residue polypeptide: Co-chaperone protein HscB homolog (173 aa).

Positions 5 to 77 (SHFALFDLEP…SQRARYLLSL (73 aa)) constitute a J domain.

Belongs to the HscB family. In terms of assembly, interacts with HscA and stimulates its ATPase activity.

Co-chaperone involved in the maturation of iron-sulfur cluster-containing proteins. Seems to help targeting proteins to be folded toward HscA. This is Co-chaperone protein HscB homolog from Azotobacter vinelandii (strain DJ / ATCC BAA-1303).